Here is a 126-residue protein sequence, read N- to C-terminus: Protein LiaI (126 aa).

2 helical membrane-spanning segments follow: residues 11 to 31 (FLLIVFGISVFFGGGSFGFII) and 56 to 76 (IIVGGIGAIMLICSLPFVVGI).

Its subcellular location is the cell membrane. In Bacillus subtilis (strain 168), this protein is Protein LiaI (liaI).